The primary structure comprises 599 residues: CAP-Gly domain-containing linker protein 4 (599 aa).

ANK repeat units lie at residues 65-101 (TSVS…NVND), 149-180 (TNMN…DVDA), and 186-215 (NFGT…NPAF). Residues 303–345 (GTTEFASGQWAGIELDEPEGKNNGSVGRVQYFKCAPKYGIFAP) form the CAP-Gly 1 domain. Residues 387-482 (SGLMTSKKEN…TSAANNTHRE (96 aa)) form a disordered region. Over residues 443-462 (LSTSSSSGKKTLSKSPSLPS) the composition is skewed to low complexity. Residues 468-478 (LKSSTTSAANN) are compositionally biased toward polar residues. One can recognise a CAP-Gly 2 domain in the interval 505–547 (GTTNFAPGYWYGIELEKPHGKNDGSVGGVQYFSCSPRYGIFAP). S557 is modified (phosphoserine). A disordered region spans residues 565 to 599 (SSNKQNHSYPGFRRSFSTTSASSQKEINRRNAFAK). Residues 576–587 (FRRSFSTTSASS) are compositionally biased toward low complexity.

The sequence is that of CAP-Gly domain-containing linker protein 4 (Clip4) from Rattus norvegicus (Rat).